A 123-amino-acid chain; its full sequence is Non-specific lipid-transfer protein 3 (123 aa).

A signal peptide spans 1–25 (MASSGQLLKLVCLVAVMCCMAVGGP). Disulfide bonds link Cys33/Cys80, Cys43/Cys57, Cys58/Cys105, and Cys78/Cys119.

Belongs to the plant LTP family.

Plant non-specific lipid-transfer proteins transfer phospholipids as well as galactolipids across membranes. May play a role in wax or cutin deposition in the cell walls of expanding epidermal cells and certain secretory tissues. This chain is Non-specific lipid-transfer protein 3, found in Prunus dulcis (Almond).